A 219-amino-acid polypeptide reads, in one-letter code: Thiamine-phosphate synthase (219 aa).

4-amino-2-methyl-5-(diphosphooxymethyl)pyrimidine-binding positions include 44–48 (QFREK) and Asn79. Mg(2+) contacts are provided by Asp80 and Asp99. Ser117 contacts 4-amino-2-methyl-5-(diphosphooxymethyl)pyrimidine. Residue 143 to 145 (TST) participates in 2-[(2R,5Z)-2-carboxy-4-methylthiazol-5(2H)-ylidene]ethyl phosphate binding. 4-amino-2-methyl-5-(diphosphooxymethyl)pyrimidine is bound at residue Lys146. 2-[(2R,5Z)-2-carboxy-4-methylthiazol-5(2H)-ylidene]ethyl phosphate is bound by residues Gly175 and 195–196 (IS).

The protein belongs to the thiamine-phosphate synthase family. Mg(2+) is required as a cofactor.

The enzyme catalyses 2-[(2R,5Z)-2-carboxy-4-methylthiazol-5(2H)-ylidene]ethyl phosphate + 4-amino-2-methyl-5-(diphosphooxymethyl)pyrimidine + 2 H(+) = thiamine phosphate + CO2 + diphosphate. The catalysed reaction is 2-(2-carboxy-4-methylthiazol-5-yl)ethyl phosphate + 4-amino-2-methyl-5-(diphosphooxymethyl)pyrimidine + 2 H(+) = thiamine phosphate + CO2 + diphosphate. It carries out the reaction 4-methyl-5-(2-phosphooxyethyl)-thiazole + 4-amino-2-methyl-5-(diphosphooxymethyl)pyrimidine + H(+) = thiamine phosphate + diphosphate. The protein operates within cofactor biosynthesis; thiamine diphosphate biosynthesis; thiamine phosphate from 4-amino-2-methyl-5-diphosphomethylpyrimidine and 4-methyl-5-(2-phosphoethyl)-thiazole: step 1/1. Condenses 4-methyl-5-(beta-hydroxyethyl)thiazole monophosphate (THZ-P) and 2-methyl-4-amino-5-hydroxymethyl pyrimidine pyrophosphate (HMP-PP) to form thiamine monophosphate (TMP). In Bacillus cereus (strain ATCC 14579 / DSM 31 / CCUG 7414 / JCM 2152 / NBRC 15305 / NCIMB 9373 / NCTC 2599 / NRRL B-3711), this protein is Thiamine-phosphate synthase.